Consider the following 568-residue polypeptide: Zinc finger protein 76 (568 aa).

Residue Lys24 forms a Glycyl lysine isopeptide (Lys-Gly) (interchain with G-Cter in SUMO2) linkage. 3 consecutive repeat copies span residues 34–45 (IQLEDGTTAYIH), 62–73 (VQLEDGSMAYIH), and 88–99 (VQLEDGSTAYIH). The 3 X 12 AA approximate repeats stretch occupies residues 34–99 (IQLEDGTTAY…LEDGSTAYIH (66 aa)). 7 consecutive C2H2-type zinc fingers follow at residues 165-189 (FRCG…ERAH), 195-219 (YRCD…VRTH), 225-249 (YKCP…VRTH), 255-279 (FRCP…VRTH), 285-309 (YTCP…VRIH), 315-339 (YVCT…HVVH), and 345-368 (YTCS…RSAH). Positions 365 to 402 (RSAHGELEATEESEQALYEQQQLEAASAAEESPPPKPT) are disordered. Low complexity predominate over residues 379 to 395 (QALYEQQQLEAASAAEE).

It belongs to the krueppel C2H2-type zinc-finger protein family.

It localises to the nucleus. Functionally, may be involved in transcriptional regulation. This Mus musculus (Mouse) protein is Zinc finger protein 76 (Znf76).